Here is a 578-residue protein sequence, read N- to C-terminus: Probable arginine--tRNA ligase, mitochondrial (578 aa).

The transit peptide at 1–16 (MACGFRRSIASQLSRV) directs the protein to the mitochondrion. Residues 133–135 (SPN), histidine 144, tyrosine 322, aspartate 326, and glutamine 350 each bind L-arginine. The 'HIGH' region signature appears at 133–144 (SPNVAKKFHVGH). Lysine 568 carries the N6-acetyllysine modification.

Belongs to the class-I aminoacyl-tRNA synthetase family.

It is found in the mitochondrion membrane. The catalysed reaction is tRNA(Arg) + L-arginine + ATP = L-arginyl-tRNA(Arg) + AMP + diphosphate. Its function is as follows. Catalyzes the attachment of arginine to tRNA(Arg) in a two-step reaction: arginine is first activated by ATP to form Arg-AMP and then transferred to the acceptor end of tRNA(Arg). The polypeptide is Probable arginine--tRNA ligase, mitochondrial (RARS2) (Bos taurus (Bovine)).